The primary structure comprises 391 residues: 3-ketoacyl-CoA thiolase (391 aa).

The Acyl-thioester intermediate role is filled by cysteine 95. Active-site proton acceptor residues include histidine 347 and cysteine 377.

This sequence belongs to the thiolase-like superfamily. Thiolase family. In terms of assembly, heterotetramer of two alpha chains (FadB) and two beta chains (FadA).

The protein resides in the cytoplasm. It carries out the reaction an acyl-CoA + acetyl-CoA = a 3-oxoacyl-CoA + CoA. It participates in lipid metabolism; fatty acid beta-oxidation. Catalyzes the final step of fatty acid oxidation in which acetyl-CoA is released and the CoA ester of a fatty acid two carbons shorter is formed. The sequence is that of 3-ketoacyl-CoA thiolase from Pseudomonas savastanoi pv. phaseolicola (strain 1448A / Race 6) (Pseudomonas syringae pv. phaseolicola (strain 1448A / Race 6)).